A 342-amino-acid polypeptide reads, in one-letter code: Spermidine synthase (342 aa).

The tract at residues 9 to 42 (MKGTELPVKRPREEEAETEMEAANNSNNGCEKEE) is disordered. Residues 52–289 (PGWFSEISPL…GMIGFMLCST (238 aa)) form the PABS domain. Gln-83 is a binding site for S-adenosyl 3-(methylsulfanyl)propylamine. A putrescine-binding site is contributed by Tyr-113. Residues Gln-114, Asp-138, Glu-158, 189-190 (DG), and Asp-208 each bind S-adenosyl 3-(methylsulfanyl)propylamine. Asp-208 (proton acceptor) is an active-site residue. Residues 208 to 211 (DSSD) and Tyr-277 each bind putrescine.

Belongs to the spermidine/spermine synthase family.

It carries out the reaction S-adenosyl 3-(methylsulfanyl)propylamine + putrescine = S-methyl-5'-thioadenosine + spermidine + H(+). It functions in the pathway amine and polyamine biosynthesis; spermidine biosynthesis; spermidine from putrescine: step 1/1. The polypeptide is Spermidine synthase (SPDSYN) (Solanum lycopersicum (Tomato)).